The sequence spans 337 residues: Integrase/recombinase (337 aa).

In terms of domain architecture, Core-binding (CB) spans 14 to 94 (VKVLDQLRER…ALLFFYGKVL (81 aa)). The region spanning 112-328 (RLPVVLTPDE…GGAGVRSPLD (217 aa)) is the Tyr recombinase domain. Catalysis depends on residues arginine 146, lysine 171, histidine 277, arginine 280, and histidine 303. Residue tyrosine 312 is the O-(3'-phospho-DNA)-tyrosine intermediate of the active site.

This sequence belongs to the 'phage' integrase family.

In terms of biological role, putative integrase believed to be involved in the insertion of antibiotic resistance genes into plasmids and transposons. The protein is Integrase/recombinase (int) of Escherichia coli.